Reading from the N-terminus, the 227-residue chain is Probable proteasome subunit beta type-2 (227 aa).

The propeptide at 1-6 (MITKTG) is removed in mature form. Catalysis depends on threonine 7, which acts as the Nucleophile.

This sequence belongs to the peptidase T1B family. As to quaternary structure, the 26S proteasome consists of a 20S proteasome core and two 19S regulatory subunits. The 20S proteasome core is composed of 28 subunits that are arranged in four stacked rings, resulting in a barrel-shaped structure. The two end rings are each formed by seven alpha subunits, and the two central rings are each formed by seven beta subunits. The catalytic chamber with the active sites is on the inside of the barrel.

It localises to the cytoplasm. The protein resides in the nucleus. It catalyses the reaction Cleavage of peptide bonds with very broad specificity.. In terms of biological role, the proteasome degrades poly-ubiquitinated proteins in the cytoplasm and in the nucleus. It is essential for the regulated turnover of proteins and for the removal of misfolded proteins. The proteasome is a multicatalytic proteinase complex that is characterized by its ability to cleave peptides with Arg, Phe, Tyr, Leu, and Glu adjacent to the leaving group at neutral or slightly basic pH. It has an ATP-dependent proteolytic activity. In Encephalitozoon cuniculi (strain GB-M1) (Microsporidian parasite), this protein is Probable proteasome subunit beta type-2 (PUP1).